We begin with the raw amino-acid sequence, 387 residues long: 3-ketoacyl-CoA thiolase (387 aa).

Residue cysteine 91 is the Acyl-thioester intermediate of the active site. Catalysis depends on proton acceptor residues histidine 343 and cysteine 373.

It belongs to the thiolase-like superfamily. Thiolase family. In terms of assembly, heterotetramer of two alpha chains (FadB) and two beta chains (FadA).

Its subcellular location is the cytoplasm. The enzyme catalyses an acyl-CoA + acetyl-CoA = a 3-oxoacyl-CoA + CoA. It functions in the pathway lipid metabolism; fatty acid beta-oxidation. Its function is as follows. Catalyzes the final step of fatty acid oxidation in which acetyl-CoA is released and the CoA ester of a fatty acid two carbons shorter is formed. This is 3-ketoacyl-CoA thiolase from Escherichia coli O1:K1 / APEC.